The sequence spans 389 residues: Large envelope protein (389 aa).

M1 is modified (N-acetylmethionine). G2 is lipidated: N-myristoyl glycine; by host. Positions 2 to 108 are pre-S1; that stretch reads GQNLSVTNPL…PPLRDTHPQA (107 aa). The interval 2 to 163 is pre-S; that stretch reads GQNLSVTNPL…FLKTGDPALN (162 aa). The Virion surface; in external conformation portion of the chain corresponds to 2-170; sequence GQNLSVTNPL…ALNMESISSG (169 aa). The Intravirion; in internal conformation portion of the chain corresponds to 2–242; the sequence is GQNLSVTNPL…PGYRWMCLRR (241 aa). Residues 78–105 form a disordered region; sequence PAVPPPASTNRQSGRRPTPISPPLRDTH. The pre-S2 stretch occupies residues 109–163; that stretch reads MQWNSTVFHQALQDPRVRGLYFPAGGSSSGTVSPVPTTASPISSTFLKTGDPALN. The chain crosses the membrane as a helical span at residues 171-191; sequence FLGPLLVLQAGFFLLTKILTI. Topologically, residues 192 to 242 are intravirion; in external conformation; that stretch reads PQSLDSWWTSLNFLGGAPVCPGQNSQSLTSNHSPTSCPPICPGYRWMCLRR. A helical membrane pass occupies residues 243–263; it reads FIIFLFILLLCLIFLLVLLDY. Over 264–337 the chain is Virion surface; sequence RGMLPVCPLL…WASVRFSWLN (74 aa). N309 carries N-linked (GlcNAc...) asparagine; by host glycosylation. A helical transmembrane segment spans residues 338-358; the sequence is LLVPFVQWFAGLSPTVWLSVI. Residues 359–364 are Intravirion-facing; sequence WMIWYW. Residues 365–387 form a helical membrane-spanning segment; that stretch reads GPSLYNILSPFIPLLPIFFCLWA. The Virion surface portion of the chain corresponds to 388–389; that stretch reads YI.

Belongs to the orthohepadnavirus major surface antigen family. In its internal form (Li-HBsAg), interacts with the capsid protein and with the isoform S. Interacts with host chaperone CANX. In terms of assembly, associates with host chaperone CANX through its pre-S2 N glycan; this association may be essential for isoform M proper secretion. As to quaternary structure, interacts with isoform L. Interacts with the antigens of satellite virus HDV (HDVAgs); this interaction is required for encapsidation of HDV genomic RNA. Isoform M is N-terminally acetylated by host at a ratio of 90%, and N-glycosylated by host at the pre-S2 region. In terms of processing, myristoylated.

It localises to the virion membrane. In terms of biological role, the large envelope protein exists in two topological conformations, one which is termed 'external' or Le-HBsAg and the other 'internal' or Li-HBsAg. In its external conformation the protein attaches the virus to cell receptors and thereby initiating infection. This interaction determines the species specificity and liver tropism. This attachment induces virion internalization predominantly through caveolin-mediated endocytosis. The large envelope protein also assures fusion between virion membrane and endosomal membrane. In its internal conformation the protein plays a role in virion morphogenesis and mediates the contact with the nucleocapsid like a matrix protein. Its function is as follows. The middle envelope protein plays an important role in the budding of the virion. It is involved in the induction of budding in a nucleocapsid independent way. In this process the majority of envelope proteins bud to form subviral lipoprotein particles of 22 nm of diameter that do not contain a nucleocapsid. This Pongo pygmaeus (Bornean orangutan) protein is Large envelope protein.